Consider the following 67-residue polypeptide: Large ribosomal subunit protein uL29 (67 aa).

Belongs to the universal ribosomal protein uL29 family.

The chain is Large ribosomal subunit protein uL29 from Ehrlichia ruminantium (strain Gardel).